The chain runs to 327 residues: E3 ubiquitin ligase Rnf121 (327 aa).

Transmembrane regions (helical) follow at residues 50–70 (MHAE…LLLV), 79–96 (SYNM…VYFT), 99–119 (LHWW…AFVT), 148–168 (ATGI…NLLF), and 173–193 (EDAM…GVLG). An RING-type; atypical zinc finger spans residues 226–276 (CAVCGQQIFVDVNEEGIIENTYRLSCNHVFHEFCIRGWCIVGKKQTCPYCK).

This sequence belongs to the RNF121 family.

The protein localises to the endoplasmic reticulum membrane. The catalysed reaction is S-ubiquitinyl-[E2 ubiquitin-conjugating enzyme]-L-cysteine + [acceptor protein]-L-lysine = [E2 ubiquitin-conjugating enzyme]-L-cysteine + N(6)-ubiquitinyl-[acceptor protein]-L-lysine.. It functions in the pathway protein modification; protein ubiquitination. In terms of biological role, E3 ubiquitin ligase which accepts ubiquitin and transfers it to substrates thereby promoting their degradation by the endoplasmic reticulum-associated degradation (ERAD) pathway which is a pathway involved in ubiquitin-dependent degradation of misfolded endoplasmic reticulum proteins. May regulate the unfolded protein response to reduce endoplasmic reticulum stress. This chain is E3 ubiquitin ligase Rnf121 (rnf121), found in Xenopus tropicalis (Western clawed frog).